We begin with the raw amino-acid sequence, 778 residues long: Phosphoribosylformylglycinamidine synthase subunit PurL (778 aa).

The active site involves His44. Positions 47 and 86 each coordinate ATP. Glu88 contacts Mg(2+). Residues 89 to 92 (SHNH) and Arg111 each bind substrate. His90 serves as the catalytic Proton acceptor. 2 residues coordinate Mg(2+): Asp112 and Asp265. Substrate is bound at residue 309–311 (ESQ). The disordered stretch occupies residues 455–474 (TRQPPGEGLPGRSGQAGPPK). Positions 518 and 555 each coordinate ATP. Asn556 is a binding site for Mg(2+). Ser558 lines the substrate pocket.

This sequence belongs to the FGAMS family. As to quaternary structure, monomer. Part of the FGAM synthase complex composed of 1 PurL, 1 PurQ and 2 PurS subunits.

The protein resides in the cytoplasm. It carries out the reaction N(2)-formyl-N(1)-(5-phospho-beta-D-ribosyl)glycinamide + L-glutamine + ATP + H2O = 2-formamido-N(1)-(5-O-phospho-beta-D-ribosyl)acetamidine + L-glutamate + ADP + phosphate + H(+). It functions in the pathway purine metabolism; IMP biosynthesis via de novo pathway; 5-amino-1-(5-phospho-D-ribosyl)imidazole from N(2)-formyl-N(1)-(5-phospho-D-ribosyl)glycinamide: step 1/2. Part of the phosphoribosylformylglycinamidine synthase complex involved in the purines biosynthetic pathway. Catalyzes the ATP-dependent conversion of formylglycinamide ribonucleotide (FGAR) and glutamine to yield formylglycinamidine ribonucleotide (FGAM) and glutamate. The FGAM synthase complex is composed of three subunits. PurQ produces an ammonia molecule by converting glutamine to glutamate. PurL transfers the ammonia molecule to FGAR to form FGAM in an ATP-dependent manner. PurS interacts with PurQ and PurL and is thought to assist in the transfer of the ammonia molecule from PurQ to PurL. The chain is Phosphoribosylformylglycinamidine synthase subunit PurL from Symbiobacterium thermophilum (strain DSM 24528 / JCM 14929 / IAM 14863 / T).